The primary structure comprises 715 residues: Protein naked cuticle homolog (715 aa).

The EF-hand domain occupies 18 to 53 (KKPQPLQFSFTLYDLDGHGKITKDDIAGIVSTIYES). A disordered region spans residues 256-282 (SRAKRKVVRKSRSSRKASKLTDDFSRP). Residues 257–273 (RAKRKVVRKSRSSRKAS) are compositionally biased toward basic residues. The interval 305–334 (ECWKSSLCRRELIEIIRDSMVKNSLCFQPN) is required for nuclear localization and inhibition of Wnt signaling. A disordered region spans residues 639 to 690 (ELHQSVQQQQGTHQQQQQPQSSVSSPTHHHHHHAGASLLGENSGSSASAAST). Composition is skewed to low complexity over residues 642–664 (QSVQQQQGTHQQQQQPQSSVSSP) and 673–690 (GASLLGENSGSSASAAST).

Belongs to the NKD family.

It is found in the cell membrane. Its subcellular location is the cytoplasm. The protein localises to the nucleus. Its function is as follows. Cell autonomous antagonist of the canonical Wnt signaling pathway. May activate a second Wnt signaling pathway that controls planar cell polarity. Required for neuroblast specification. This chain is Protein naked cuticle homolog, found in Aedes aegypti (Yellowfever mosquito).